The sequence spans 339 residues: Deubiquitinase and deneddylase Dub2 (339 aa).

A helical membrane pass occupies residues 36–56 (IIIALFLIVISCGLILCAYTF). Active-site residues include His-203, Asp-220, and Cys-282.

Belongs to the peptidase C48 family.

It is found in the secreted. The protein localises to the host cell. It localises to the membrane. In terms of biological role, effector proteins function to alter host cell physiology and promote bacterial survival in host tissues. This protease possesses deubiquitinating and deneddylating activities. The chain is Deubiquitinase and deneddylase Dub2 (cdu2) from Chlamydia trachomatis serovar A (strain ATCC VR-571B / DSM 19440 / HAR-13).